Consider the following 401-residue polypeptide: Glutamyl-tRNA reductase (401 aa).

Substrate is bound by residues 45-48, S101, 106-108, and Q112; these read TCNR and EDQ. Residue C46 is the Nucleophile of the active site. 177-182 contacts NADP(+); that stretch reads GYGDVG.

Belongs to the glutamyl-tRNA reductase family. Homodimer.

The enzyme catalyses (S)-4-amino-5-oxopentanoate + tRNA(Glu) + NADP(+) = L-glutamyl-tRNA(Glu) + NADPH + H(+). It participates in porphyrin-containing compound metabolism; protoporphyrin-IX biosynthesis; 5-aminolevulinate from L-glutamyl-tRNA(Glu): step 1/2. Functionally, catalyzes the NADPH-dependent reduction of glutamyl-tRNA(Glu) to glutamate 1-semialdehyde (GSA). The chain is Glutamyl-tRNA reductase from Clostridium botulinum (strain Eklund 17B / Type B).